We begin with the raw amino-acid sequence, 440 residues long: Protein C-ets-1 (440 aa).

2 positions are modified to N6-acetyllysine; alternate: lysine 8 and lysine 15. Glycyl lysine isopeptide (Lys-Gly) (interchain with G-Cter in SUMO2); alternate cross-links involve residues lysine 8 and lysine 15. Residue lysine 15 forms a Glycyl lysine isopeptide (Lys-Gly) (interchain with G-Cter in SUMO); alternate linkage. Threonine 38 is subject to Phosphothreonine; by MAPK. Residues 51–136 (ATFSGFTKEQ…EHLEILQKED (86 aa)) enclose the PNT domain. An activation domain; required for transcription activation region spans residues 130–243 (EILQKEDVKP…DNMCLGRASR (114 aa)). Lysine 138 participates in a covalent cross-link: Glycyl lysine isopeptide (Lys-Gly) (interchain with G-Cter in SUMO2). Tyrosine 223 is modified (phosphotyrosine). Residue lysine 227 forms a Glycyl lysine isopeptide (Lys-Gly) (interchain with G-Cter in SUMO) linkage. Serine 251 bears the Phosphoserine; by CaMK2 mark. Serine 254 carries the phosphoserine modification. Residue threonine 265 is modified to Phosphothreonine. Serine 267 and serine 270 each carry phosphoserine. Phosphoserine; by CaMK2 occurs at positions 282 and 285. The helix HI-1 stretch occupies residues 304–312 (FKDYVRDRA). An N6-acetyllysine modification is found at lysine 305. A helix HI-2 region spans residues 323–330 (AAALAGYT). Residues 335 to 415 (IQLWQFLLEL…AGKRYVYRFV (81 aa)) constitute a DNA-binding region (ETS). Positions 418–422 (LQSLL) are helix H4. The interval 426–432 (PEELHAM) is helix H5.

The protein belongs to the ETS family. As to quaternary structure, binds DNA as a homodimer; homodimerization is required for transcription activation. Interacts with MAF and MAFB. Interacts with PAX5; the interaction alters DNA-binding properties. Interacts with DAXX. Interacts with UBE2I. Interacts with SP100; the interaction is direct and modulates ETS1 transcriptional activity. In terms of processing, phosphorylation at Ser-251, Ser-282 and Ser-285 by CaMK2/CaMKII in response to calcium signaling decreases affinity for DNA: an increasing number of phosphoserines causes DNA-binding to become progressively weaker. Post-translationally, sumoylated on Lys-15 and Lys-227, preferentially with SUMO2; which inhibits transcriptional activity. Ubiquitinated; which induces proteasomal degradation.

Its subcellular location is the nucleus. It is found in the cytoplasm. Autoinhibited by a module composed of four alpha helices (HI-1, HI-2, H4, and H5) that flank the DNA-binding ETS domain, reducing the affinity for DNA. Phosphorylation by CaMK2/CaMKII in response to calcium signaling decreases affinity for DNA. Functionally, transcription factor. Directly controls the expression of cytokine and chemokine genes in a wide variety of different cellular contexts. May control the differentiation, survival and proliferation of lymphoid cells. May also regulate angiogenesis through regulation of expression of genes controlling endothelial cell migration and invasion. The sequence is that of Protein C-ets-1 (Ets1) from Mus musculus (Mouse).